Here is a 390-residue protein sequence, read N- to C-terminus: D-alanyl-D-alanine carboxypeptidase DacD (390 aa).

An N-terminal signal peptide occupies residues 1–23; that stretch reads MLLKRRLFIAASLFAMHLSPALA. Ser65 (acyl-ester intermediate) is an active-site residue. Catalysis depends on Lys68, which acts as the Proton acceptor. Ser131 is an active-site residue. Residue Lys234 participates in substrate binding.

This sequence belongs to the peptidase S11 family.

It is found in the cell inner membrane. It catalyses the reaction Preferential cleavage: (Ac)2-L-Lys-D-Ala-|-D-Ala. Also transpeptidation of peptidyl-alanyl moieties that are N-acyl substituents of D-alanine.. It participates in cell wall biogenesis; peptidoglycan biosynthesis. Its function is as follows. Removes C-terminal D-alanyl residues from sugar-peptide cell wall precursors. In Salmonella typhimurium (strain LT2 / SGSC1412 / ATCC 700720), this protein is D-alanyl-D-alanine carboxypeptidase DacD (dacD).